The following is a 1801-amino-acid chain: Sperm flagellar protein 2 (1801 aa).

Residues methionine 1–glutamine 105 enclose the Calponin-homology (CH) domain. Coiled-coil stretches lie at residues glutamate 176–glutamine 260 and alanine 321–alanine 395. A disordered region spans residues glutamine 632–glutamate 659. Coiled coils occupy residues asparagine 722 to methionine 748 and alanine 869 to serine 895. 2 stretches are compositionally biased toward basic and acidic residues: residues leucine 883 to serine 892 and glutamate 909 to glutamine 918. A disordered region spans residues leucine 883–aspartate 949. Residues glutamate 1051–isoleucine 1077 are a coiled coil. 2 stretches are compositionally biased toward basic and acidic residues: residues arginine 1233–serine 1250 and lysine 1261–lysine 1295. Disordered stretches follow at residues arginine 1233–valine 1304, lysine 1651–threonine 1695, and serine 1781–lysine 1801. Residues glutamine 1252–proline 1286 adopt a coiled-coil conformation. An interaction with IFT20 region spans residues glutamate 1305–valine 1657. A coiled-coil region spans residues glutamate 1665–threonine 1695. Residues asparagine 1669–glutamate 1687 are compositionally biased toward basic and acidic residues.

Interacts (via C-terminus) with IFT20. Interacts with DYNC1I2. In terms of tissue distribution, predominantly expressed in ciliated tissues such as lung, trachea, testis, brain, and at lower levels in kidney and spleen.

It localises to the cell projection. Its subcellular location is the cilium. It is found in the flagellum. The protein resides in the cytoplasm. The protein localises to the golgi apparatus. In terms of biological role, required for correct axoneme development in spermatozoa. Important for normal development of the manchette and sperm head morphology. Essential for male fertility. Plays a role in localization of the intraflagellar transport protein IFT20 to the manchette, suggesting function as an adapter for dynein-mediated protein transport during spermatogenesis. Also plays a role in bone growth where it seems to be required for normal osteoblast differentiation. This chain is Sperm flagellar protein 2 (Spef2), found in Rattus norvegicus (Rat).